A 691-amino-acid polypeptide reads, in one-letter code: Gex-3-interacting protein 13 (691 aa).

2 disordered regions span residues 18 to 97 (TASL…SAHL) and 171 to 195 (PASP…KRQR). Low complexity predominate over residues 31–46 (SSFTTTSESTSPPYSS). The span at 47–57 (SEHHSPTDQRT) shows a compositional bias: basic and acidic residues. The segment covering 58 to 79 (ETPTSDSGNASFSPENVATSFE) has biased composition (polar residues). The segment covering 171–183 (PASPCTTAASAPS) has biased composition (low complexity). BED-type zinc fingers lie at residues 194–242 (QRRN…YEKV) and 424–473 (LRRH…YEKV). Zn(2+)-binding residues include Cys-212, Cys-215, His-230, His-235, Cys-443, Cys-446, His-461, and His-466.

As to quaternary structure, interacts with gex-3.

In Caenorhabditis elegans, this protein is Gex-3-interacting protein 13 (gei-13).